Reading from the N-terminus, the 291-residue chain is Ribonuclease Z (291 aa).

Zn(2+) contacts are provided by H61, H63, D65, H66, H133, D201, and H257. D65 acts as the Proton acceptor in catalysis.

It belongs to the RNase Z family. As to quaternary structure, homodimer. Zn(2+) serves as cofactor.

The catalysed reaction is Endonucleolytic cleavage of RNA, removing extra 3' nucleotides from tRNA precursor, generating 3' termini of tRNAs. A 3'-hydroxy group is left at the tRNA terminus and a 5'-phosphoryl group is left at the trailer molecule.. In terms of biological role, zinc phosphodiesterase, which displays some tRNA 3'-processing endonuclease activity. Probably involved in tRNA maturation, by removing a 3'-trailer from precursor tRNA. The chain is Ribonuclease Z from Saccharolobus islandicus (strain L.S.2.15 / Lassen #1) (Sulfolobus islandicus).